Consider the following 92-residue polypeptide: Putative transition state regulator Abh (92 aa).

Residues 5-50 (GVVRKVDELGRIVMPIELRRALDIAIKDSIEFFVDGDKIILKKYKP) form the SpoVT-AbrB domain.

It to B.subtilis AbrB and SpoVT.

The sequence is that of Putative transition state regulator Abh (abh) from Bacillus subtilis (strain 168).